A 206-amino-acid polypeptide reads, in one-letter code: Probable GTP-binding protein EngB (206 aa).

The 188-residue stretch at 8–195 (RDAEVVLVGR…EECLRTRFHE (188 aa)) folds into the EngB-type G domain. Residues 16-23 (GRSNVGKS), 41-45 (GVTRQ), 60-63 (DLPG), 140-143 (NKTD), and 175-177 (ICA) each bind GTP. Positions 23 and 43 each coordinate Mg(2+).

Belongs to the TRAFAC class TrmE-Era-EngA-EngB-Septin-like GTPase superfamily. EngB GTPase family. Requires Mg(2+) as cofactor.

In terms of biological role, necessary for normal cell division and for the maintenance of normal septation. This is Probable GTP-binding protein EngB from Halorubrum lacusprofundi (strain ATCC 49239 / DSM 5036 / JCM 8891 / ACAM 34).